Here is a 163-residue protein sequence, read N- to C-terminus: COP9 signalosome complex subunit 9 (163 aa).

The PCI domain maps to 5 to 120; it reads EVLHAVLDPK…SVGRRIKVLR (116 aa).

As to quaternary structure, component of a COP9 signalosome-like (CSN) complex.

It is found in the cytoplasm. The protein localises to the nucleus. Functionally, component of the COP9 signalosome (CSN) complex that acts as a regulator of the ubiquitin (Ubl) conjugation pathway by mediating the deneddylation of the cullin subunit of SCF-type E3 ubiquitin-protein ligase complexes. The complex is involved in the regulation of the mating pheromone response. The chain is COP9 signalosome complex subunit 9 (CSN9) from Eremothecium gossypii (strain ATCC 10895 / CBS 109.51 / FGSC 9923 / NRRL Y-1056) (Yeast).